The primary structure comprises 147 residues: Phosphoribosyl-AMP cyclohydrolase (147 aa).

Position 91 (Asp91) interacts with Mg(2+). Cys92 contacts Zn(2+). Residues Asp93 and Asp95 each coordinate Mg(2+). Zn(2+) contacts are provided by Cys109 and Cys116.

The protein belongs to the PRA-CH family. Homodimer. Mg(2+) serves as cofactor. Zn(2+) is required as a cofactor.

It is found in the cytoplasm. It carries out the reaction 1-(5-phospho-beta-D-ribosyl)-5'-AMP + H2O = 1-(5-phospho-beta-D-ribosyl)-5-[(5-phospho-beta-D-ribosylamino)methylideneamino]imidazole-4-carboxamide. It functions in the pathway amino-acid biosynthesis; L-histidine biosynthesis; L-histidine from 5-phospho-alpha-D-ribose 1-diphosphate: step 3/9. Its function is as follows. Catalyzes the hydrolysis of the adenine ring of phosphoribosyl-AMP. In Rhodopseudomonas palustris (strain BisB18), this protein is Phosphoribosyl-AMP cyclohydrolase.